Reading from the N-terminus, the 686-residue chain is Pollen receptor-like kinase 5 (686 aa).

The first 39 residues, 1–39 (MRNWEDPFTLACNTALKKNLPSCIFIIIFISVLCPVAMS), serve as a signal peptide directing secretion. Over 40-283 (QVVVPDSDAD…GKKAGSFYTL (244 aa)) the chain is Extracellular. An N-linked (GlcNAc...) asparagine glycan is attached at N60. LRR repeat units follow at residues 112–135 (MKNL…VKRF), 136–159 (TSLK…AFLG), 161–184 (PLLK…LASL), 185–208 (PMLL…QQKD), and 210–230 (KLAS…LRNM). Residues 284–304 (AIILIVIGIILVIIALVFCFV) traverse the membrane as a helical segment. At 305–686 (QSRRRNFLSA…DDDFGFSMNR (382 aa)) the chain is on the cytoplasmic side. The segment covering 328 to 339 (NYHQSTNKNNKP) has biased composition (polar residues). The disordered stretch occupies residues 328-355 (NYHQSTNKNNKPAESVNHTRRGSMPDPG). The Protein kinase domain maps to 375–648 (RASAEVLGSG…REVVEMVEML (274 aa)). Phosphoserine is present on S377. Residues 381 to 389 (LGSGTFGAS) and K403 each bind ATP. Phosphoserine occurs at positions 455 and 458. T472 is modified (phosphothreonine). Y542 is modified (phosphotyrosine). At S545 the chain carries Phosphoserine.

It belongs to the protein kinase superfamily. Ser/Thr protein kinase family. In terms of assembly, interacts with the GRI peptide. As to expression, expressed in pollen and/or in flowers. Detected at low levels in leaves.

It is found in the cell membrane. The catalysed reaction is L-seryl-[protein] + ATP = O-phospho-L-seryl-[protein] + ADP + H(+). It catalyses the reaction L-threonyl-[protein] + ATP = O-phospho-L-threonyl-[protein] + ADP + H(+). Its function is as follows. Receptor-like kinase involved in the control of pollen germination and pollen tube polar growth. The extracellular domain serves as a sensor for peptides derived from GRI. May act as a downstream element for ROS-dependent cell death induced by GRI. This Arabidopsis thaliana (Mouse-ear cress) protein is Pollen receptor-like kinase 5.